Here is a 159-residue protein sequence, read N- to C-terminus: Probable cyclic pyranopterin monophosphate synthase (159 aa).

Residues 75-77 (LCH) and 111-112 (ME) contribute to the substrate site. Residue D126 is part of the active site.

This sequence belongs to the MoaC family. Homohexamer; trimer of dimers.

The catalysed reaction is (8S)-3',8-cyclo-7,8-dihydroguanosine 5'-triphosphate = cyclic pyranopterin phosphate + diphosphate. Its pathway is cofactor biosynthesis; molybdopterin biosynthesis. In terms of biological role, catalyzes the conversion of (8S)-3',8-cyclo-7,8-dihydroguanosine 5'-triphosphate to cyclic pyranopterin monophosphate (cPMP). This chain is Probable cyclic pyranopterin monophosphate synthase, found in Pyrococcus abyssi (strain GE5 / Orsay).